Here is a 230-residue protein sequence, read N- to C-terminus: UPF0173 metal-dependent hydrolase Acid_3917 (230 aa).

This sequence belongs to the UPF0173 family.

The polypeptide is UPF0173 metal-dependent hydrolase Acid_3917 (Solibacter usitatus (strain Ellin6076)).